The primary structure comprises 515 residues: Bifunctional purine biosynthesis protein PurH (515 aa).

In terms of domain architecture, MGS-like spans 1-145 (MTKRALISVS…KNHASVTVVV (145 aa)).

This sequence belongs to the PurH family.

The enzyme catalyses (6R)-10-formyltetrahydrofolate + 5-amino-1-(5-phospho-beta-D-ribosyl)imidazole-4-carboxamide = 5-formamido-1-(5-phospho-D-ribosyl)imidazole-4-carboxamide + (6S)-5,6,7,8-tetrahydrofolate. It catalyses the reaction IMP + H2O = 5-formamido-1-(5-phospho-D-ribosyl)imidazole-4-carboxamide. The protein operates within purine metabolism; IMP biosynthesis via de novo pathway; 5-formamido-1-(5-phospho-D-ribosyl)imidazole-4-carboxamide from 5-amino-1-(5-phospho-D-ribosyl)imidazole-4-carboxamide (10-formyl THF route): step 1/1. Its pathway is purine metabolism; IMP biosynthesis via de novo pathway; IMP from 5-formamido-1-(5-phospho-D-ribosyl)imidazole-4-carboxamide: step 1/1. This Streptococcus mutans serotype c (strain ATCC 700610 / UA159) protein is Bifunctional purine biosynthesis protein PurH.